The sequence spans 254 residues: MKETSVLTIQNLKACVNEFEVLHNINLQIKTNETHVIMGPNGSGKSSLLKVIAGHPSYKVIEGKIFVENIDITQATPEERSNLGVFLGFQYPIEITGVNNADFLRAVYNQKRKKQGLKDLDPLEFLEILSPILDLVSMDQTFLHRNLNEGFSGGEKKRNEILQMILSKPRLAILDEPDSGLDIDALRSISEVINKLRNQKQCMLIITHYQNLLDYVIPDKVHIMDHGKIVETGDVTLAIQLKRKGYKWIKQSTN.

The 245-residue stretch at 7–251 folds into the ABC transporter domain; it reads LTIQNLKACV…KRKGYKWIKQ (245 aa). 39–46 serves as a coordination point for ATP; it reads GPNGSGKS.

It belongs to the ABC transporter superfamily. Ycf16 family.

The protein resides in the plastid. Its subcellular location is the chloroplast. The sequence is that of Probable ATP-dependent transporter ycf16 (ycf16) from Cyanidium caldarium (Red alga).